Reading from the N-terminus, the 143-residue chain is uncharacterized protein (143 aa).

The disordered stretch occupies residues 1–21; it reads MAAMDTGQRADPSNPGDKEGD.

This is an uncharacterized protein from Homo sapiens (Human).